The sequence spans 282 residues: Elongation factor Ts (282 aa).

The tract at residues 79–82 (TDFV) is involved in Mg(2+) ion dislocation from EF-Tu.

The protein belongs to the EF-Ts family.

It is found in the cytoplasm. Functionally, associates with the EF-Tu.GDP complex and induces the exchange of GDP to GTP. It remains bound to the aminoacyl-tRNA.EF-Tu.GTP complex up to the GTP hydrolysis stage on the ribosome. The chain is Elongation factor Ts from Shewanella piezotolerans (strain WP3 / JCM 13877).